The following is a 1733-amino-acid chain: MGQTVTTPLSLTLQHWGDVQRIASNQSVDVKKRRWVTFCSAEWPTFNVGWPQDGTFNLGVISQVKSRVFCPGPHGHPDQVPYIVTWEALAYDPPPWVKPFVSPKPPPLPTAPVLPPGPSAQPPSRSALYPALTLSIKSKPPKPQVLPDSGGPLIDLLTEDPPPYGVQPSSSARENNEEEAATTSEVSPPSPMVSRLRGRRDPPAADSTTSQAFPLRMGGDGQLQYWPFSSSDLYNWKNNNPSFSEDPGKLTALIESVLITHQPTWDDCQQLLGTLLTGEEKQRVLLEAGKAVRGNDGRPTQLPNEVNAAFPLERPDWDYTTTEGRNHLVLYRQLLLAGLQNAGRSPTNLAKVKGITQGPNESPSAFLERLKEAYRRYTPYDPEDPGQETNVSMSFIWQSAPDIGRKLERLEDLKSKTLGDLVREAEKIFNKRETPEEREERIRREIEEKEERRRAEDEQRERERDRRRHREMSKLLATVVIGQRQDRQGGERRRPQLDKDQCAYCKEKGHWAKDCPKKPRGPRGPRPQTSLLTLGDXGGQGQEPPPEPRITLKVGGQPVTFLVDTGAQHSVLTQNPGPLSDKSAWVQGATGGKRYRWTTDRKVHLATGKVTHSFLHVPDCPYPLLGRDLLTKLKAQIHFEGSGAQVVGPMGQPLQVLTLNIENKYRLHETSKEPDVPLGSTWLSDFPQAWAETGGMGLAVRQAPLIIPLKATSTPVSIKQYPMSQEARLGIKPHIQRLLDQGILVPCQSPWNTPLLPVKKPGTNDYRPVQDLREVNKRVEDIHPTVPNPYNLLSGLPPSHQWYTVLDLKDAFFCLRLHPTSQPLFAFEWRDPEMGISGQLTWTRLPQGFKNSPTLFDEALHRDLADFRIQHPDLILLQYVDDLLLAATSEQDCQRGTRALLQTLGNLGYRASAKKAQICQKQVKYLGYLLKEGQRWLTEARKETVMGQPTPKTPRQLREFLGTAGFCRLWIPGFAEMAAPLYPLTKTGTLFNWGPDQQKAYQEIKQALLTAPALGLPDLTKPFELFVDEKQGYAKGVLTQKLGPWRRPVAYLSKKLDPVAAGWPPCLRMVAAIAVLTKDAGKLTMGQPLVILAPHAVEALVKQPPDRWLSNARMTHYQAMLLDTDRVQFGPVVALNPATLLPLPEKEAPHDCLEILAETHGTRPDLTDQPIPDADYTWYTDGSSFLQEGQRRAGAAVTTETEVIWARALPAGTSAQRAELIALTQALKMAEGKKLNVYTDSRYAFATAHVHGEIYRRRGLLTSEGREIKNKNEILALLKALFLPKRLSIIHCPGHQKGNSAEARGNRMADQAAREAAMKAVLETSTLLIEDSTPYTPPHFHYTETDLKRLRELGATYNQTKGYWVLQGKPVMPDQSVFELLDSLHRLTHPSPQKMKALLDREESPYYMLNRDRTIQYVTETCTACAQVNASKAKIGAGVRVRGHRPGTHWEVDFTEVKPGLYGYKYLLVFVDTFSGWVEAFPTKRETAKVVTKKLLEDIFPRFGMPQVLGSDNGPAFASQVSQSVADLLGIDWKLHCAYRPQSSGQVERMNRTIKETLTKLTLASGTRDWVLLLPLALYRARNTPGPHGLTPYEILYGAPPPLVNFHDPEMSKLTNSPSLQAHLQALQAVQQEVWKPLAAAYQDQLDQPVIPHPFRVGDAVWVRRHQTKNLEPRWKGPYTVLLTTPTALKVDGISAWIHAAHVKAATTPPAGTAWKVQRSQNPLKIRLTRGAP.

A lipid anchor (N-myristoyl glycine; by host) is attached at G2. Positions 109 to 112 (PTAP) match the PTAP/PSAP motif motif. Positions 128-132 (LYPAL) match the LYPX(n)L motif motif. Disordered stretches follow at residues 139–218 (KPPK…LRMG), 449–497 (KEER…RPQL), and 511–549 (WAKD…PEPR). The PPXY motif signature appears at 161–164 (PPPY). A Phosphoserine; by host modification is found at S190. Residues 436 to 476 (EEREERIRREIEEKEERRRAEDEQRERERDRRRHREMSKLL) adopt a coiled-coil conformation. Basic and acidic residues-rich tracts occupy residues 449–464 (KEER…ERER) and 484–497 (RQDR…RPQL). The segment at 500–517 (DQCAYCKEKGHWAKDCPK) adopts a CCHC-type zinc-finger fold. Residues 526–535 (RPQTSLLTLG) show a composition bias toward low complexity. The region spanning 559 to 629 (VTFLVDTGAQ…CPYPLLGRDL (71 aa)) is the Peptidase A2 domain. Residue D564 is the Protease; shared with dimeric partner of the active site. RNA contacts are provided by Y721, D771, R773, and P787. The Reverse transcriptase domain occupies 739–930 (LDQGILVPCQ…KQVKYLGYLL (192 aa)). D807 provides a ligand contact to Mg(2+). N851 and P853 together coordinate RNA. D881 and D882 together coordinate Mg(2+). DNA is bound by residues R941, R955, R958, and F966. Positions 1054 and 1055 each coordinate RNA. W1063 lines the DNA pocket. An RNA-binding site is contributed by K1082. R1113 contributes to the DNA binding site. One can recognise an RNase H type-1 domain in the interval 1172–1318 (PDADYTWYTD…ADQAAREAAM (147 aa)). Mg(2+) is bound at residue D1181. RNA is bound by residues S1184 and L1186. Positions 1187, 1214, and 1216 each coordinate DNA. E1219 and D1240 together coordinate Mg(2+). R1242 and R1266 together coordinate RNA. Mg(2+) contacts are provided by D1310, D1453, and D1512. Positions 1442 to 1600 (RGHRPGTHWE…TPYEILYGAP (159 aa)) constitute an Integrase catalytic domain.

In terms of assembly, homohexamer, that further associates as homomultimer. The virus core is composed of a lattice formed from hexagonal rings, each containing six capsid monomers. The protease is a homodimer, whose active site consists of two apposed aspartic acid residues. The reverse transcriptase is a monomer. As to quaternary structure, interacts (via PPXY motif) with host NEDD4. Interacts (via PSAP motif) with host TSG101. Interacts (via LYPX(n)L motif) with host PDCD6IP. The reverse transcriptase is a monomer (Potential). Interacts (via RNase domains) with host release factor ETF1; this interaction is essential for translational readthrough of amber codon between viral gag and pol genes, as well as for viral replication. In terms of assembly, homodimer. Mg(2+) is required as a cofactor. The cofactor is Mn(2+). Specific enzymatic cleavages by the viral protease yield mature proteins. The protease is released by autocatalytic cleavage. The polyprotein is cleaved during and after budding, this process is termed maturation. Post-translationally, sumoylated; which is required for virus replication. In terms of processing, phosphorylated on serine residues.

It is found in the host cell membrane. It localises to the virion. It carries out the reaction DNA(n) + a 2'-deoxyribonucleoside 5'-triphosphate = DNA(n+1) + diphosphate. It catalyses the reaction Endonucleolytic cleavage to 5'-phosphomonoester.. Functionally, plays a role in budding and is processed by the viral protease during virion maturation outside the cell. During budding, it recruits, in a PPXY-dependent or independent manner, Nedd4-like ubiquitin ligases that conjugate ubiquitin molecules to Gag, or to Gag binding host factors. Interaction with HECT ubiquitin ligases probably link the viral protein to the host ESCRT pathway and facilitate release. Targets Gag and gag-pol polyproteins to the plasma membrane via a multipartite membrane binding signal, that includes its myristoylated N-terminus. Also mediates nuclear localization of the pre-integration complex. In terms of biological role, forms the spherical core of the virion that encapsulates the genomic RNA-nucleocapsid complex. Its function is as follows. Involved in the packaging and encapsidation of two copies of the genome. Binds with high affinity to conserved UCUG elements within the packaging signal, located near the 5'-end of the genome. This binding is dependent on genome dimerization. Acts as a nucleic acid chaperone which is involved in rearrangement of nucleic acid secondary structures during gRNA retrotranscription. Functionally, the aspartyl protease mediates proteolytic cleavages of Gag and Gag-Pol polyproteins during or shortly after the release of the virion from the plasma membrane. Cleavages take place as an ordered, step-wise cascade to yield mature proteins. This process is called maturation. Displays maximal activity during the budding process just prior to particle release from the cell. RT is a multifunctional enzyme that converts the viral dimeric RNA genome into dsDNA in the cytoplasm, shortly after virus entry into the cell. This enzyme displays a DNA polymerase activity that can copy either DNA or RNA templates, and a ribonuclease H (RNase H) activity that cleaves the RNA strand of RNA-DNA heteroduplexes in a partially processive 3' to 5' endonucleasic mode. Conversion of viral genomic RNA into dsDNA requires many steps. A tRNA binds to the primer-binding site (PBS) situated at the 5' end of the viral RNA. RT uses the 3' end of the tRNA primer to perform a short round of RNA-dependent minus-strand DNA synthesis. The reading proceeds through the U5 region and ends after the repeated (R) region which is present at both ends of viral RNA. The portion of the RNA-DNA heteroduplex is digested by the RNase H, resulting in a ssDNA product attached to the tRNA primer. This ssDNA/tRNA hybridizes with the identical R region situated at the 3' end of viral RNA. This template exchange, known as minus-strand DNA strong stop transfer, can be either intra- or intermolecular. RT uses the 3' end of this newly synthesized short ssDNA to perform the RNA-dependent minus-strand DNA synthesis of the whole template. RNase H digests the RNA template except for a polypurine tract (PPT) situated at the 5' end of the genome. It is not clear if both polymerase and RNase H activities are simultaneous. RNase H probably can proceed both in a polymerase-dependent (RNA cut into small fragments by the same RT performing DNA synthesis) and a polymerase-independent mode (cleavage of remaining RNA fragments by free RTs). Secondly, RT performs DNA-directed plus-strand DNA synthesis using the PPT that has not been removed by RNase H as primers. PPT and tRNA primers are then removed by RNase H. The 3' and 5' ssDNA PBS regions hybridize to form a circular dsDNA intermediate. Strand displacement synthesis by RT to the PBS and PPT ends produces a blunt ended, linear dsDNA copy of the viral genome that includes long terminal repeats (LTRs) at both ends. In terms of biological role, catalyzes viral DNA integration into the host chromosome, by performing a series of DNA cutting and joining reactions. This enzyme activity takes place after virion entry into a cell and reverse transcription of the RNA genome in dsDNA. The first step in the integration process is 3' processing. This step requires a complex comprising the viral genome, matrix protein and integrase. This complex is called the pre-integration complex (PIC). The integrase protein removes 2 nucleotides from each 3' end of the viral DNA, leaving recessed CA OH's at the 3' ends. In the second step that requires cell division, the PIC enters cell nucleus. In the third step, termed strand transfer, the integrase protein joins the previously processed 3' ends to the 5' ends of strands of target cellular DNA at the site of integration. The last step is viral DNA integration into host chromosome. This is Gag-Pol polyprotein (gag-pol) from Homo sapiens (Human).